The chain runs to 301 residues: Pyridoxal 5'-phosphate synthase subunit PdxS (301 aa).

A D-ribose 5-phosphate-binding site is contributed by Asp31. Lys88 serves as the catalytic Schiff-base intermediate with D-ribose 5-phosphate. Residue Gly160 participates in D-ribose 5-phosphate binding. Lys172 contributes to the D-glyceraldehyde 3-phosphate binding site. D-ribose 5-phosphate is bound by residues Gly221 and 242–243 (GS).

This sequence belongs to the PdxS/SNZ family. In terms of assembly, in the presence of PdxT, forms a dodecamer of heterodimers.

The catalysed reaction is aldehydo-D-ribose 5-phosphate + D-glyceraldehyde 3-phosphate + L-glutamine = pyridoxal 5'-phosphate + L-glutamate + phosphate + 3 H2O + H(+). Its pathway is cofactor biosynthesis; pyridoxal 5'-phosphate biosynthesis. In terms of biological role, catalyzes the formation of pyridoxal 5'-phosphate from ribose 5-phosphate (RBP), glyceraldehyde 3-phosphate (G3P) and ammonia. The ammonia is provided by the PdxT subunit. Can also use ribulose 5-phosphate and dihydroxyacetone phosphate as substrates, resulting from enzyme-catalyzed isomerization of RBP and G3P, respectively. This is Pyridoxal 5'-phosphate synthase subunit PdxS from Methanosarcina acetivorans (strain ATCC 35395 / DSM 2834 / JCM 12185 / C2A).